Reading from the N-terminus, the 91-residue chain is Class I hydrophobin 3 (91 aa).

The N-terminal stretch at 1–17 is a signal peptide; the sequence is MLFRLFTIPSIALGVLG. Cystine bridges form between C31-C70, C35-C61, C36-C53, and C71-C87.

Belongs to the fungal hydrophobin family. Self-assembles to form functional amyloid fibrils called rodlets. Self-assembly into fibrillar rodlets occurs spontaneously at hydrophobic:hydrophilic interfaces and the rodlets further associate laterally to form amphipathic monolayers. In terms of tissue distribution, expressed in conidia.

It localises to the secreted. The protein localises to the cell wall. Its function is as follows. Aerial growth, conidiation, and dispersal of filamentous fungi in the environment rely upon a capability of their secreting small amphipathic proteins called hydrophobins (HPBs) with low sequence identity. Class I can self-assemble into an outermost layer of rodlet bundles on aerial cell surfaces, conferring cellular hydrophobicity that supports fungal growth, development and dispersal; whereas Class II form highly ordered films at water-air interfaces through intermolecular interactions but contribute nothing to the rodlet structure. HYD3 is a class I hydrophobin located on the conidial surface that activates specifically the humoral and cellular immunity of Metarhizium acridum's own host insect, Locusta migratoria manilensis (Meyen) but not that of other non-host insects. Improves the resistance of locusts to both specialist and generalist fungal pathogens (wide host range) when topically applied to the cuticle, but has no effect on the fungal resistance of other insects, including Spodoptera frugiperda and Galleria mellonella. In Metarhizium acridum (strain CQMa 102), this protein is Class I hydrophobin 3.